Reading from the N-terminus, the 385-residue chain is Mannitol-1-phosphate 5-dehydrogenase (385 aa).

3–14 (ALQFGAGNIGRG) contacts NAD(+).

This sequence belongs to the mannitol dehydrogenase family.

The catalysed reaction is D-mannitol 1-phosphate + NAD(+) = beta-D-fructose 6-phosphate + NADH + H(+). In Buchnera aphidicola subsp. Acyrthosiphon pisum (strain Tuc7), this protein is Mannitol-1-phosphate 5-dehydrogenase.